We begin with the raw amino-acid sequence, 627 residues long: Siderophore iron transporter ARN1 (627 aa).

Residues 1 to 70 (MESVHSRDPV…TEIIGSAYNK (70 aa)) lie on the Extracellular side of the membrane. A helical membrane pass occupies residues 71–91 (WYLQAILLLSAFICGYGYGLD). Residues 92–110 (GNIRYIYTGYATSSYSEHS) are Cytoplasmic-facing. A helical transmembrane segment spans residues 111–131 (LLSTINVINAVVSAASQIIYA). At 132–135 (RLSD) the chain is on the extracellular side. The helical transmembrane segment at 136–156 (VFGRLYLFISAVILYVVGTII) threads the bilayer. Topologically, residues 157–167 (QSQAYDVQRYA) are cytoplasmic. The chain crosses the membrane as a helical span at residues 168 to 188 (AGAIFYNAGYVGVILILLIIL). Topologically, residues 189 to 197 (SDFSSLKWR) are extracellular. A helical membrane pass occupies residues 198 to 218 (LLYQFVPTWPFIINTWIAGNI). The Cytoplasmic portion of the chain corresponds to 219–231 (TSRANPVVNWSWD). The chain crosses the membrane as a helical span at residues 232 to 252 (VGMWAFIFPLSCVPIVLCMLH). Residues 253–290 (MQWRARKTPEWHALKGQKSYYQEHGFIKILKQLFWMLD) lie on the Extracellular side of the membrane. A helical transmembrane segment spans residues 291-311 (VVGVLLMGCSLGCILVPLTLA). Over 312 to 323 (GGVKTTWNDSRL) the chain is Cytoplasmic. The chain crosses the membrane as a helical span at residues 324 to 344 (IGPFVLGFVLIPILWIWEYRF). The Extracellular portion of the chain corresponds to 345 to 367 (ARDPILPYRLVKDRAVWSSMGIS). The chain crosses the membrane as a helical span at residues 368 to 388 (FLIDFIYYMAADYLYTVMIVA). At 389–398 (VNESVKSATR) the chain is on the cytoplasmic side. The chain crosses the membrane as a helical span at residues 399 to 419 (IATLSSFVSTVASPFFALLVT). Over 420–424 (RCTRL) the chain is Extracellular. The helical transmembrane segment at 425–445 (KPFIMFGCALWMVAMGLLYHF) threads the bilayer. The Cytoplasmic segment spans residues 446–454 (RGGSQSHSG). A helical membrane pass occupies residues 455–475 (IIGALCVWGVGTTLFTYPVTV). The Extracellular segment spans residues 476-563 (SVQSAVSHEN…LMNAYKYVQR (88 aa)). The chain crosses the membrane as a helical span at residues 564–584 (LETIVALVFCVPLIAFSLCLR). Residues 585 to 627 (DPKLTDTVAVEYIEDGEYVDTKDNDPILDWFEKLPSKFTFKRE) are Cytoplasmic-facing.

The protein belongs to the major facilitator superfamily.

The protein resides in the cell membrane. It is found in the endosome membrane. Functionally, involved in the transport of siderophore ferrichrome and so has a role in iron homeostasis. This Saccharomyces cerevisiae (strain ATCC 204508 / S288c) (Baker's yeast) protein is Siderophore iron transporter ARN1 (ARN1).